Consider the following 140-residue polypeptide: Ribosome-binding factor A (140 aa).

The interval 1–23 (MLRDRNRSGVRGGAEGPSQRQRR) is disordered.

Belongs to the RbfA family. In terms of assembly, monomer. Binds 30S ribosomal subunits, but not 50S ribosomal subunits or 70S ribosomes.

It is found in the cytoplasm. Its function is as follows. One of several proteins that assist in the late maturation steps of the functional core of the 30S ribosomal subunit. Associates with free 30S ribosomal subunits (but not with 30S subunits that are part of 70S ribosomes or polysomes). Required for efficient processing of 16S rRNA. May interact with the 5'-terminal helix region of 16S rRNA. The chain is Ribosome-binding factor A from Acidiphilium cryptum (strain JF-5).